The chain runs to 252 residues: Protein BTG3 (252 aa).

The interval 138–162 (VTSDYHSGSSSSDEDTSKEVEVKPS) is disordered.

Belongs to the BTG family. In terms of tissue distribution, highly expressed in the brain.

In terms of biological role, overexpression impairs serum-induced cell cycle progression from the G0/G1 to S phase. This chain is Protein BTG3, found in Rattus norvegicus (Rat).